The chain runs to 587 residues: Folylpolyglutamate synthase, mitochondrial (587 aa).

The transit peptide at Met-1–Gly-42 directs the protein to the mitochondrion. Position 106 to 109 (Gly-106 to Ser-109) interacts with ATP. Positions 130, 200, and 228 each coordinate Mg(2+). Residues Arg-363 and Asp-377 each coordinate ATP. The segment at Pro-484–His-508 is disordered. Ser-539 is subject to Phosphoserine.

This sequence belongs to the folylpolyglutamate synthase family. Monomer. It depends on a monovalent cation as a cofactor.

The protein localises to the mitochondrion inner membrane. The protein resides in the mitochondrion matrix. Its subcellular location is the cytoplasm. It catalyses the reaction (6S)-5,6,7,8-tetrahydrofolyl-(gamma-L-Glu)(n) + L-glutamate + ATP = (6S)-5,6,7,8-tetrahydrofolyl-(gamma-L-Glu)(n+1) + ADP + phosphate + H(+). It participates in cofactor biosynthesis; tetrahydrofolylpolyglutamate biosynthesis. Its function is as follows. Catalyzes conversion of folates to polyglutamate derivatives allowing concentration of folate compounds in the cell and the intracellular retention of these cofactors, which are important substrates for most of the folate-dependent enzymes that are involved in one-carbon transfer reactions involved in purine, pyrimidine and amino acid synthesis. This chain is Folylpolyglutamate synthase, mitochondrial (FPGS), found in Cricetulus griseus (Chinese hamster).